The following is a 313-amino-acid chain: Ankyrin repeat family A protein 2 (313 aa).

ANK repeat units lie at residues 148-180, 181-213, 214-246, 247-279, and 280-313; these read ANSL…HTDE, EGFT…LLGK, GRES…EYDW, NGGT…IETD, and SGYN…NIKE.

Interacts (via ANK repeats) with CCDC8 (via PxLPxI/L motif); mediates the interaction with the 3M complex which is composed of CCDC8, CUL7 and OBSL1. Interacts (via ANK repeats) with HDAC4 (via PxLPxI/L motif). Interacts (via ANK repeats) with HDAC5 (via PxLPxI/L motif). Interacts (via ANK repeats) with LRP2/megalin (via PxLPxI/L motif). Interacts (via ANK repeats) with RFX7 (via PxLPxI/L motif). Interacts with AHRR. Interacts with NEK6.

Its subcellular location is the cytoplasm. The protein localises to the cytoskeleton. It is found in the membrane. May regulate the interaction between the 3M complex and the histone deacetylases HDAC4 and HDAC5. May also regulate LRP2/megalin. This is Ankyrin repeat family A protein 2 (ANKRA2) from Bos taurus (Bovine).